A 198-amino-acid chain; its full sequence is DnaJ homolog subfamily C member 12 (198 aa).

Met-1 is subject to N-acetylmethionine. A J domain is found at 14 to 79; sequence DYYTLLGCDE…ESRARYDHWR (66 aa). The interval 121–183 is disordered; sequence TNTAQNKERS…CGHLHFRWSG (63 aa). Positions 126-156 are enriched in basic and acidic residues; the sequence is NKERSEQRETKQGDPDSTPEKMMQKESESPE. A phosphoserine mark is found at Ser-160, Ser-166, and Ser-182.

Interacts with HSPA8. Interacts with TPH1. Interacts with TPH2.

It localises to the cytoplasm. Functionally, probable co-chaperone that participates in the proper folding of biopterin-dependent aromatic amino acid hydroxylases, which include phenylalanine-4-hydroxylase (PAH), tyrosine 3-monooxygenase (TH) and peripheral and neuronal tryptophan hydroxylases (TPH1 and TPH2). This is DnaJ homolog subfamily C member 12 (Dnajc12) from Rattus norvegicus (Rat).